Consider the following 137-residue polypeptide: Peptide methionine sulfoxide reductase MsrB (137 aa).

Residues 7 to 129 enclose the MsrB domain; sequence AEELKKNLSE…NSASLRFTDG (123 aa). Residues Cys46, Cys49, Cys95, and Cys98 each contribute to the Zn(2+) site. Cys118 (nucleophile) is an active-site residue.

Belongs to the MsrB Met sulfoxide reductase family. Requires Zn(2+) as cofactor.

It carries out the reaction L-methionyl-[protein] + [thioredoxin]-disulfide + H2O = L-methionyl-(R)-S-oxide-[protein] + [thioredoxin]-dithiol. In Escherichia coli O45:K1 (strain S88 / ExPEC), this protein is Peptide methionine sulfoxide reductase MsrB.